A 339-amino-acid polypeptide reads, in one-letter code: MSEFTLKTRLLAALEGKPVDKVPVCSVTQTGIVELMDKVGAAWPEAHTNPELMAKLAIANYELSGLEAVRLPYCLTVLGEAMGCEINMGTKNRQPSVTASPYPKNLDGAVVPADLLQRNRIPAVLEAIKIVREKVGPDVPIIGGMEGPVTLASDLISVKSFMKWSIKKTDLFEQALDISAEAAIAYANAMVEAGADVIAIADPVASPDLMSPETFKQFLQSRLQKFSAGVNSVTVLHICGKVNAILSDMADCGFEGLSVEEKIGTAAEGKKIIGDRARLVGNISSPFTLLPGPIDKIKAEAKVALEGGIDVLAPGCGIAPMTPLENVKALVAARDEYYA.

Positions 237, 239, and 316 each coordinate Zn(2+).

It belongs to the uroporphyrinogen decarboxylase family. MtbA/mtaA subfamily. Zn(2+) is required as a cofactor.

The enzyme catalyses methyl-Co(III)-[methanol-specific corrinoid protein] + coenzyme M = Co(I)-[methanol-specific corrinoid protein] + methyl-coenzyme M + H(+). In terms of biological role, methyltransferase involved in methanogenesis in the methanol pathway. Catalyzes the transfer of the methyl group from the methylated corrinoid protein MtaC to coenzyme M, forming the substrate for coenzyme-B sulfoethylthiotransferase. MtaC can be substituted by free cob(I)alamin in vitro. This is Methylcobamide:CoM methyltransferase MtaA (mtaA) from Methanosarcina barkeri (strain Fusaro / DSM 804).